Reading from the N-terminus, the 337-residue chain is Delta-aminolevulinic acid dehydratase (337 aa).

Residue Lys205 is the Schiff-base intermediate with substrate of the active site. Positions 215 and 229 each coordinate 5-aminolevulinate. Glu245 contacts Mg(2+). The active-site Schiff-base intermediate with substrate is the Lys260. 5-aminolevulinate contacts are provided by Ser286 and Tyr324.

Belongs to the ALAD family. In terms of assembly, homooctamer; formed by oligomerization of dimers. The cofactor is Mg(2+).

It catalyses the reaction 2 5-aminolevulinate = porphobilinogen + 2 H2O + H(+). Its pathway is porphyrin-containing compound metabolism; protoporphyrin-IX biosynthesis; coproporphyrinogen-III from 5-aminolevulinate: step 1/4. With respect to regulation, stimulated by magnesium ions. Catalyzes an early step in the biosynthesis of tetrapyrroles. Binds two molecules of 5-aminolevulinate per subunit, each at a distinct site, and catalyzes their condensation to form porphobilinogen. The sequence is that of Delta-aminolevulinic acid dehydratase (hemB) from Pseudomonas aeruginosa (strain ATCC 15692 / DSM 22644 / CIP 104116 / JCM 14847 / LMG 12228 / 1C / PRS 101 / PAO1).